Consider the following 280-residue polypeptide: ESX-1 secretion-associated protein EspJ (280 aa).

Serine 70 carries the post-translational modification Phosphoserine. 2 stretches are compositionally biased toward low complexity: residues 167-181 (QTIS…QSAQ) and 246-280 (PAQA…TTTL). Positions 167–280 (QTISQTAQQA…TPAPSTTTTL (114 aa)) are disordered.

Phosphorylated at Ser-70.

It localises to the secreted. Could be involved in regulation of growth and intracellular survival. This is ESX-1 secretion-associated protein EspJ from Mycobacterium tuberculosis (strain CDC 1551 / Oshkosh).